The following is a 161-amino-acid chain: MIITIGGLAGTGTTTVARILSERMGIPCVSAGDVFRQMAAERELDILEFSRIAEENPEIDIEIDRRQARLADEHEDLILEGRLSAHFARADLKVLLIAPFDVRAQRISVRESKDIETVREEIRIRERSEAQRYREIHGIDVDDLEVYDIVINTNRFDAEAS.

7–15 (GLAGTGTTT) lines the ATP pocket.

It belongs to the cytidylate kinase family. Type 2 subfamily.

The protein localises to the cytoplasm. The enzyme catalyses CMP + ATP = CDP + ADP. The catalysed reaction is dCMP + ATP = dCDP + ADP. This chain is Cytidylate kinase (cmk), found in Methanothermobacter thermautotrophicus (strain ATCC 29096 / DSM 1053 / JCM 10044 / NBRC 100330 / Delta H) (Methanobacterium thermoautotrophicum).